The primary structure comprises 238 residues: Ribosomal RNA small subunit methyltransferase G (238 aa).

S-adenosyl-L-methionine-binding positions include Gly-77, Phe-82, 128–129 (AE), and Arg-147.

Belongs to the methyltransferase superfamily. RNA methyltransferase RsmG family.

It localises to the cytoplasm. In terms of biological role, specifically methylates the N7 position of guanine in position 535 of 16S rRNA. The polypeptide is Ribosomal RNA small subunit methyltransferase G (Brevibacillus brevis (strain 47 / JCM 6285 / NBRC 100599)).